The sequence spans 181 residues: Bifunctional protein PyrR (181 aa).

Residues 101 to 113 (VILVDDVLFTGRT) carry the PRPP-binding motif.

This sequence belongs to the purine/pyrimidine phosphoribosyltransferase family. PyrR subfamily.

It carries out the reaction UMP + diphosphate = 5-phospho-alpha-D-ribose 1-diphosphate + uracil. Its function is as follows. Regulates the transcription of the pyrimidine nucleotide (pyr) operon in response to exogenous pyrimidines. Functionally, also displays a weak uracil phosphoribosyltransferase activity which is not physiologically significant. The protein is Bifunctional protein PyrR of Desulfosudis oleivorans (strain DSM 6200 / JCM 39069 / Hxd3) (Desulfococcus oleovorans).